Reading from the N-terminus, the 202-residue chain is Imidazoleglycerol-phosphate dehydratase (202 aa).

Belongs to the imidazoleglycerol-phosphate dehydratase family.

It localises to the cytoplasm. It catalyses the reaction D-erythro-1-(imidazol-4-yl)glycerol 3-phosphate = 3-(imidazol-4-yl)-2-oxopropyl phosphate + H2O. It participates in amino-acid biosynthesis; L-histidine biosynthesis; L-histidine from 5-phospho-alpha-D-ribose 1-diphosphate: step 6/9. The sequence is that of Imidazoleglycerol-phosphate dehydratase from Corynebacterium diphtheriae (strain ATCC 700971 / NCTC 13129 / Biotype gravis).